The primary structure comprises 571 residues: Glutamate--tRNA ligase (571 aa).

Residues 110–120 (PNPNGPGTLGS) carry the 'HIGH' region motif.

It belongs to the class-I aminoacyl-tRNA synthetase family. Glutamate--tRNA ligase type 2 subfamily.

Its subcellular location is the cytoplasm. The catalysed reaction is tRNA(Glu) + L-glutamate + ATP = L-glutamyl-tRNA(Glu) + AMP + diphosphate. Its function is as follows. Catalyzes the attachment of glutamate to tRNA(Glu) in a two-step reaction: glutamate is first activated by ATP to form Glu-AMP and then transferred to the acceptor end of tRNA(Glu). This chain is Glutamate--tRNA ligase, found in Methanosarcina acetivorans (strain ATCC 35395 / DSM 2834 / JCM 12185 / C2A).